Here is a 284-residue protein sequence, read N- to C-terminus: D-tagatose-1,6-bisphosphate aldolase subunit GatY (284 aa).

Asp-82 acts as the Proton donor in catalysis. Residues His-83 and His-180 each contribute to the Zn(2+) site. Dihydroxyacetone phosphate is bound at residue Gly-181. Zn(2+) is bound at residue His-208. Residues 209 to 211 (GAS) and 230 to 233 (NVAT) contribute to the dihydroxyacetone phosphate site.

This sequence belongs to the class II fructose-bisphosphate aldolase family. TagBP aldolase GatY subfamily. Forms a complex with GatZ. Zn(2+) is required as a cofactor.

It catalyses the reaction D-tagatofuranose 1,6-bisphosphate = D-glyceraldehyde 3-phosphate + dihydroxyacetone phosphate. The protein operates within carbohydrate metabolism; D-tagatose 6-phosphate degradation; D-glyceraldehyde 3-phosphate and glycerone phosphate from D-tagatose 6-phosphate: step 2/2. In terms of biological role, catalytic subunit of the tagatose-1,6-bisphosphate aldolase GatYZ, which catalyzes the reversible aldol condensation of dihydroxyacetone phosphate (DHAP or glycerone-phosphate) with glyceraldehyde 3-phosphate (G3P) to produce tagatose 1,6-bisphosphate (TBP). Requires GatZ subunit for full activity and stability. Is involved in the catabolism of galactitol. The polypeptide is D-tagatose-1,6-bisphosphate aldolase subunit GatY (Salmonella choleraesuis (strain SC-B67)).